A 175-amino-acid polypeptide reads, in one-letter code: MASPRHILLINGPNLNLLGTREPQIYGSTTLHDIEQAAQTQASSLGLRLSTFQSNHEGAIIDRIHQAAGFSPSLSPSGAAAATTTEAGAGPGTGVDKLSAIIINPGAYTHTSVGIRDALLGTGIPFVEVHVSNVHAREAFRHHSYLSDKAAAVICGLGPFGYSAALEFAGRHMKL.

The active-site Proton acceptor is the Y26. Substrate contacts are provided by N104, H110, and D117. H130 functions as the Proton donor in the catalytic mechanism. Substrate is bound by residues 131-132 (VS) and R141.

Belongs to the type-II 3-dehydroquinase family. In terms of assembly, homododecamer. Adopts a ring-like structure, composed of an arrangement of two hexameric rings stacked on top of one another.

It catalyses the reaction 3-dehydroquinate = 3-dehydroshikimate + H2O. The protein operates within aromatic compound metabolism; 3,4-dihydroxybenzoate biosynthesis; 3,4-dihydroxybenzoate from 3-dehydroquinate: step 1/2. Functionally, is involved in the catabolism of quinate. Allows the utilization of quinate as carbon source via the beta-ketoadipate pathway. In Sordaria macrospora (strain ATCC MYA-333 / DSM 997 / K(L3346) / K-hell), this protein is Catabolic 3-dehydroquinase.